A 312-amino-acid polypeptide reads, in one-letter code: Ribosomal protein L11 methyltransferase (312 aa).

Positions 163, 184, 206, and 248 each coordinate S-adenosyl-L-methionine.

This sequence belongs to the methyltransferase superfamily. PrmA family.

The protein resides in the cytoplasm. The enzyme catalyses L-lysyl-[protein] + 3 S-adenosyl-L-methionine = N(6),N(6),N(6)-trimethyl-L-lysyl-[protein] + 3 S-adenosyl-L-homocysteine + 3 H(+). Its function is as follows. Methylates ribosomal protein L11. The protein is Ribosomal protein L11 methyltransferase of Clostridium botulinum (strain Loch Maree / Type A3).